Reading from the N-terminus, the 447-residue chain is Argininosuccinate synthase (447 aa).

Residues 20-28 (AFSGGLDTS) and Ala-46 contribute to the ATP site. Tyr-102 lines the L-citrulline pocket. Residues Gly-132 and Thr-134 each coordinate ATP. Residues Thr-134, Asn-138, and Asp-139 each coordinate L-aspartate. L-citrulline is bound at residue Asn-138. Asp-139 provides a ligand contact to ATP. L-citrulline-binding residues include Arg-142 and Ser-195. Asp-197 contacts ATP. Thr-204, Glu-206, and Glu-283 together coordinate L-citrulline.

It belongs to the argininosuccinate synthase family. Type 2 subfamily. Homotetramer.

It localises to the cytoplasm. It carries out the reaction L-citrulline + L-aspartate + ATP = 2-(N(omega)-L-arginino)succinate + AMP + diphosphate + H(+). It participates in amino-acid biosynthesis; L-arginine biosynthesis; L-arginine from L-ornithine and carbamoyl phosphate: step 2/3. The sequence is that of Argininosuccinate synthase from Neisseria gonorrhoeae (strain ATCC 700825 / FA 1090).